A 438-amino-acid polypeptide reads, in one-letter code: uncharacterized protein (438 aa).

This is an uncharacterized protein from Encephalitozoon cuniculi (strain GB-M1) (Microsporidian parasite).